The following is a 675-amino-acid chain: Heat shock 70 kDa protein 12A (675 aa).

The disordered stretch occupies residues Met-1 to Asp-45. Ala-2 is modified (N-acetylalanine). Over residues Ala-17 to Ala-26 the composition is skewed to polar residues.

This sequence belongs to the heat shock protein 70 family. As to quaternary structure, interacts with SORL1 (via cytosolic C-terminus); this interaction affects SORL1 internalization and subcellular localization. As to expression, expressed most strongly in brain, kidney and heart with little or no expression in other tissues. In the brain, expressed in glial cells, including astrocytes (at protein level). In the aorta, preferentially expressed in lesions.

It is found in the cytoplasm. Its subcellular location is the nucleus. Adapter protein for SORL1, but not SORT1. Delays SORL1 internalization and affects SORL1 subcellular localization. This Mus musculus (Mouse) protein is Heat shock 70 kDa protein 12A (Hspa12a).